Consider the following 262-residue polypeptide: Flap endonuclease Xni (262 aa).

Asp105 contributes to the Mg(2+) binding site. The 5'-3' exonuclease domain maps to 164 to 251 (SQFLDLMALA…NINLKDFRAN (88 aa)). Leu172, Ala173, Pro181, Ile183, and Ile186 together coordinate K(+). An interaction with DNA region spans residues 185–190 (GIGPKS).

It belongs to the Xni family. Mg(2+) is required as a cofactor. The cofactor is K(+).

Functionally, has flap endonuclease activity. During DNA replication, flap endonucleases cleave the 5'-overhanging flap structure that is generated by displacement synthesis when DNA polymerase encounters the 5'-end of a downstream Okazaki fragment. The polypeptide is Flap endonuclease Xni (Shewanella putrefaciens (strain CN-32 / ATCC BAA-453)).